Reading from the N-terminus, the 319-residue chain is Olfactory receptor 8K1 (319 aa).

Over 1–31 the chain is Extracellular; that stretch reads MNHVVKHNHTAVTKVTEFILMGITDNPGLQA. An N-linked (GlcNAc...) asparagine glycan is attached at Asn-8. The chain crosses the membrane as a helical span at residues 32 to 52; the sequence is PLFGLFLIIYLVTVIGNLGMV. The Cytoplasmic portion of the chain corresponds to 53–60; it reads ILTYLDSK. The chain crosses the membrane as a helical span at residues 61-81; that stretch reads LHTPMYFFLRHLSITDLGYST. At 82–105 the chain is on the extracellular side; that stretch reads VIAPKMLVNFIVHKNTISYNWYAT. The helical transmembrane segment at 106 to 126 threads the bilayer; the sequence is QLAFFEIFIISELFILSAMAY. The Cytoplasmic segment spans residues 127–145; sequence DRYVAICKPLLYVIIMAEK. Residues 146–166 form a helical membrane-spanning segment; sequence VLWVLVIVPYLYSTFVSLFLT. Topologically, residues 167–203 are extracellular; the sequence is IKLFKLSFCGSNIISYFYCDCIPLMSILCSDTNELEL. Residues 204–223 form a helical membrane-spanning segment; that stretch reads IILIFSGCNLLFSLSIVLIS. Topologically, residues 224–243 are cytoplasmic; that stretch reads YMFILVAILRMNSRKGRYKA. The helical transmembrane segment at 244-264 threads the bilayer; the sequence is FSTCSSHLTVVIMFYGTLLFI. Over 265–277 the chain is Extracellular; the sequence is YLQPKSSHTLAID. Residues 278 to 298 traverse the membrane as a helical segment; that stretch reads KMASVFYTLLIPMLNPLIYSL. Topologically, residues 299-319 are cytoplasmic; it reads RNKEVKDALKRTLTNRFKIPI.

Belongs to the G-protein coupled receptor 1 family.

It localises to the cell membrane. Functionally, odorant receptor. This chain is Olfactory receptor 8K1 (OR8K1), found in Homo sapiens (Human).